A 415-amino-acid polypeptide reads, in one-letter code: Acetylornithine aminotransferase (415 aa).

Pyridoxal 5'-phosphate-binding positions include 115-116 and phenylalanine 148; that span reads GA. Arginine 151 contacts N(2)-acetyl-L-ornithine. 239 to 242 is a binding site for pyridoxal 5'-phosphate; the sequence is DEVQ. Residue lysine 268 is modified to N6-(pyridoxal phosphate)lysine. Residue serine 295 coordinates N(2)-acetyl-L-ornithine. Residue threonine 296 coordinates pyridoxal 5'-phosphate.

Belongs to the class-III pyridoxal-phosphate-dependent aminotransferase family. ArgD subfamily. As to quaternary structure, homodimer. Pyridoxal 5'-phosphate serves as cofactor.

The protein resides in the cytoplasm. It catalyses the reaction N(2)-acetyl-L-ornithine + 2-oxoglutarate = N-acetyl-L-glutamate 5-semialdehyde + L-glutamate. The protein operates within amino-acid biosynthesis; L-arginine biosynthesis; N(2)-acetyl-L-ornithine from L-glutamate: step 4/4. The chain is Acetylornithine aminotransferase from Prochlorococcus marinus subsp. pastoris (strain CCMP1986 / NIES-2087 / MED4).